The following is a 192-amino-acid chain: Large ribosomal subunit protein bL25 (192 aa).

Belongs to the bacterial ribosomal protein bL25 family. CTC subfamily. Part of the 50S ribosomal subunit; part of the 5S rRNA/L5/L18/L25 subcomplex. Contacts the 5S rRNA. Binds to the 5S rRNA independently of L5 and L18.

In terms of biological role, this is one of the proteins that binds to the 5S RNA in the ribosome where it forms part of the central protuberance. This is Large ribosomal subunit protein bL25 from Porphyromonas gingivalis (strain ATCC 33277 / DSM 20709 / CIP 103683 / JCM 12257 / NCTC 11834 / 2561).